The following is a 323-amino-acid chain: Serine/threonine-protein phosphatase PP1-gamma catalytic subunit (323 aa).

Residues Asp64, His66, Asp92, and Asn124 each coordinate Mn(2+). The active-site Proton donor is His125. Residues His173 and His248 each coordinate Mn(2+). The interval 300–323 (EKKKPNASRPVTPPRGMITKQAKK) is disordered.

This sequence belongs to the PPP phosphatase family. PP-1 subfamily. In terms of assembly, PP1 comprises a catalytic subunit, ppp1c1, ppp1cb or ppp1cc, which is folded into its native form by inhibitor 2 and glycogen synthetase kinase 3, and then is complexed to one or several targeting or regulatory subunits. Mn(2+) serves as cofactor.

Its subcellular location is the cytoplasm. It is found in the nucleus. It localises to the cleavage furrow. The protein localises to the nucleolus. The protein resides in the nucleoplasm. Its subcellular location is the chromosome. It is found in the centromere. It localises to the kinetochore. The protein localises to the nucleus speckle. The protein resides in the midbody. Its subcellular location is the mitochondrion. It is found in the cytoskeleton. It localises to the microtubule organizing center. It carries out the reaction O-phospho-L-seryl-[protein] + H2O = L-seryl-[protein] + phosphate. The enzyme catalyses O-phospho-L-threonyl-[protein] + H2O = L-threonyl-[protein] + phosphate. Functionally, protein phosphatase 1 (PP1) is essential for cell division, and participates in the regulation of glycogen metabolism, muscle contractility and protein synthesis. Promotes nuclear envelope reassembly by targeting nuclear membrane vesicles to chromatin at the end of mitosis. Acts by dephosphorylating membrane proteins such as lamin B receptor (lbr) to regulate the binding of membrane proteins to chromatin. This Xenopus tropicalis (Western clawed frog) protein is Serine/threonine-protein phosphatase PP1-gamma catalytic subunit.